The chain runs to 369 residues: Anhydro-N-acetylmuramic acid kinase (369 aa).

12–19 (GTSMDGVD) contacts ATP.

It belongs to the anhydro-N-acetylmuramic acid kinase family.

The catalysed reaction is 1,6-anhydro-N-acetyl-beta-muramate + ATP + H2O = N-acetyl-D-muramate 6-phosphate + ADP + H(+). Its pathway is amino-sugar metabolism; 1,6-anhydro-N-acetylmuramate degradation. The protein operates within cell wall biogenesis; peptidoglycan recycling. Catalyzes the specific phosphorylation of 1,6-anhydro-N-acetylmuramic acid (anhMurNAc) with the simultaneous cleavage of the 1,6-anhydro ring, generating MurNAc-6-P. Is required for the utilization of anhMurNAc either imported from the medium or derived from its own cell wall murein, and thus plays a role in cell wall recycling. This chain is Anhydro-N-acetylmuramic acid kinase, found in Shewanella loihica (strain ATCC BAA-1088 / PV-4).